Reading from the N-terminus, the 453-residue chain is Serine/threonine-protein kinase VRK3 (453 aa).

Residues 30-123 are disordered; sequence EDGGTQSAVT…QSPQTLKRTR (94 aa). Residues 33 to 46 are compositionally biased toward polar residues; it reads GTQSAVTPHVSSVP. A Nuclear localization signal motif is present at residues 49-64; sequence RRDLNSSFETSPKKVK. Serine 54, serine 55, serine 59, serine 82, serine 83, and serine 108 each carry phosphoserine. The segment covering 81–101 has biased composition (polar residues); it reads DSSGSDNTLTSPDRATGTRSR. Residues 109–123 are compositionally biased toward polar residues; the sequence is PLSNRQSPQTLKRTR. A Protein kinase domain is found at 125–436; sequence TTSLQALATG…TLRNSLEALL (312 aa).

It belongs to the protein kinase superfamily. CK1 Ser/Thr protein kinase family. VRK subfamily. As to quaternary structure, interacts with DUSP3. Interacts with RAN. Interacts with HSP70/HSPA1A. In terms of processing, phosphorylated at Ser-108 by CDK5; leading to protection of the cell against H2O2-induced apoptosis. Ubiquitinated by RNF144A. In terms of tissue distribution, expressed in liver, kidney, muscle, thymus, and bone marrow. Weakly expressed in spleen.

It localises to the nucleus. The protein resides in the cytoplasm. The catalysed reaction is L-seryl-[protein] + ATP = O-phospho-L-seryl-[protein] + ADP + H(+). Plays a role in the regulation of the cell cycle by phosphorylating the nuclear envelope protein barrier-to-autointegration factor/BAF that is required for disassembly and reassembly, respectively, of the nuclear envelope during mitosis. Under normal physiological conditions, negatively regulates ERK activity along with VHR phosphatase in the nucleus, causing timely and transient action of ERK. Stress conditions activate CDK5 which phosphorylates VRK3 to increase VHR phosphatase activity and suppress prolonged ERK activation that causes cell death. For example, upon glutamate induction, promotes nuclear localization of HSP70/HSPA1A to inhibit ERK activation via VHR phosphatase. The protein is Serine/threonine-protein kinase VRK3 (Vrk3) of Mus musculus (Mouse).